The primary structure comprises 471 residues: Putative multidrug resistance protein MdtD (471 aa).

The Periplasmic portion of the chain corresponds to 1–11 (MTDLPDSTRWQ). A helical membrane pass occupies residues 12–32 (LWIVAFGFFMQSLDTTIVNTA). Residues 33-48 (LPSMAQSLGESPLHMH) are Cytoplasmic-facing. Residues 49 to 69 (MVIVSYVLTVAVMLPASGWLA) traverse the membrane as a helical segment. Residues 70-76 (DKVGVRN) are Periplasmic-facing. A helical membrane pass occupies residues 77 to 97 (IFFTAIVLFTLGSLFCALSGT). The Cytoplasmic portion of the chain corresponds to 98–101 (LNEL). The chain crosses the membrane as a helical span at residues 102-124 (LLARALQGVGGAMMVPVGRLTVM). At 125-137 (KIVPREQYMAAMT) the chain is on the periplasmic side. A helical transmembrane segment spans residues 138–158 (FVTLPGQIGPLLGPALGGLLV). Topologically, residues 159–164 (EYASWH) are cytoplasmic. The helical transmembrane segment at 165–185 (WIFLINIPVGIIGAIATLMLM) threads the bilayer. The Periplasmic portion of the chain corresponds to 186–196 (PNYTMQTRRFD). Residues 197 to 217 (LSGFLLLAVGMAVLTLALDGS) form a helical membrane-spanning segment. Residues 218–224 (KGTGFSP) are Cytoplasmic-facing. The chain crosses the membrane as a helical span at residues 225–245 (LAIAGLVAVGVVALVLYLLHA). The Periplasmic portion of the chain corresponds to 246–262 (QNNNRALFSLKLFRTRT). The chain crosses the membrane as a helical span at residues 263 to 283 (FSLGLAGSFAGRIGSGMLPFM). Residues 284–285 (TP) are Cytoplasmic-facing. Residues 286-306 (VFLQIGLGFSPFHAGLMMIPM) form a helical membrane-spanning segment. The Periplasmic segment spans residues 307–341 (VLGSMGMKRIVVQVVNRFGYRWVLVATTLGLSLVT). The helical transmembrane segment at 342–362 (LLFMTTALLGWYYVLPFVLFL) threads the bilayer. Residues 363–395 (QGMVNSTRFSSMNTLTLKDLPDNLASSGNSLLS) lie on the Cytoplasmic side of the membrane. Residues 396–416 (MIMQLSMSIGVTIAGLLLGLF) traverse the membrane as a helical segment. Over 417 to 430 (GSQHVSVDSGTTQT) the chain is Periplasmic. A helical transmembrane segment spans residues 431–451 (VFMYTWLSMAFIIALPAFVFA). At 452–471 (RVPSDTHQNVAISRRKRSAQ) the chain is on the cytoplasmic side.

It belongs to the major facilitator superfamily. TCR/Tet family.

The protein localises to the cell inner membrane. The polypeptide is Putative multidrug resistance protein MdtD (Escherichia coli O81 (strain ED1a)).